The following is an 821-amino-acid chain: Glycerol-3-phosphate acyltransferase (821 aa).

Positions 310–315 match the HXXXXD motif motif; it reads CHRSHM.

It belongs to the GPAT/DAPAT family.

The protein localises to the cell membrane. It catalyses the reaction sn-glycerol 3-phosphate + an acyl-CoA = a 1-acyl-sn-glycero-3-phosphate + CoA. It functions in the pathway phospholipid metabolism; CDP-diacylglycerol biosynthesis; CDP-diacylglycerol from sn-glycerol 3-phosphate: step 1/3. The chain is Glycerol-3-phosphate acyltransferase from Baumannia cicadellinicola subsp. Homalodisca coagulata.